Here is a 143-residue protein sequence, read N- to C-terminus: Large ribosomal subunit protein uL16c (143 aa).

The protein belongs to the universal ribosomal protein uL16 family. As to quaternary structure, part of the 50S ribosomal subunit.

The protein resides in the plastid. It is found in the chloroplast. The polypeptide is Large ribosomal subunit protein uL16c (Marchantia polymorpha (Common liverwort)).